The sequence spans 425 residues: 3-phosphoshikimate 1-carboxyvinyltransferase (425 aa).

Lysine 21, serine 22, and arginine 26 together coordinate 3-phosphoshikimate. Lysine 21 contacts phosphoenolpyruvate. Residues glycine 91 and arginine 119 each coordinate phosphoenolpyruvate. The 3-phosphoshikimate site is built by serine 164, glutamine 166, aspartate 311, and lysine 338. Position 166 (glutamine 166) interacts with phosphoenolpyruvate. Aspartate 311 functions as the Proton acceptor in the catalytic mechanism. Phosphoenolpyruvate is bound by residues arginine 342 and arginine 383.

Belongs to the EPSP synthase family. Monomer.

The protein localises to the cytoplasm. The enzyme catalyses 3-phosphoshikimate + phosphoenolpyruvate = 5-O-(1-carboxyvinyl)-3-phosphoshikimate + phosphate. It participates in metabolic intermediate biosynthesis; chorismate biosynthesis; chorismate from D-erythrose 4-phosphate and phosphoenolpyruvate: step 6/7. Functionally, catalyzes the transfer of the enolpyruvyl moiety of phosphoenolpyruvate (PEP) to the 5-hydroxyl of shikimate-3-phosphate (S3P) to produce enolpyruvyl shikimate-3-phosphate and inorganic phosphate. This Campylobacter fetus subsp. fetus (strain 82-40) protein is 3-phosphoshikimate 1-carboxyvinyltransferase.